A 285-amino-acid chain; its full sequence is Vacuolar protein sorting-associated protein 37B (285 aa).

Positions 50 to 170 are interaction with IST1; it reads ASNRSLAEGN…ELVLKGQRHP (121 aa). One can recognise a VPS37 C-terminal domain in the interval 84 to 173; it reads FEAYQIKKTK…LKGQRHPQAG (90 aa). Disordered stretches follow at residues 167–215 and 242–285; these read QRHP…PPVP and PLPP…FILQ. Composition is skewed to pro residues over residues 173 to 184 and 206 to 215; these read GAPPPPRVPEPS and RIPPPPPPVP. Residues 250 to 259 are compositionally biased toward polar residues; it reads PSQQGFSAQL. Positions 262 to 275 are enriched in pro residues; sequence PYPPALPQRPPPRM. A compositionally biased stretch (low complexity) spans 276–285; the sequence is APHQPGFILQ.

It belongs to the VPS37 family. As to quaternary structure, component of the ESCRT-I complex (endosomal sorting complex required for transport I) which consists of TSG101, VPS28, a VPS37 protein (VPS37A to -D) and MVB12A or MVB12B in a 1:1:1:1 stoichiometry. Interacts with TSG101, VPS28, MVB12A and MVB12B. Component of the ESCRT-I complex (endosomal sorting complex required for transport I) which consists of TSG101, VPS28, a VPS37 protein (VPS37A to -D) and UBAP1 in a 1:1:1:1 stoichiometry. Interacts with CEP55. Interacts with IST1.

It is found in the late endosome membrane. Component of the ESCRT-I complex, a regulator of vesicular trafficking process. Required for the sorting of endocytic ubiquitinated cargos into multivesicular bodies. May be involved in cell growth and differentiation. The chain is Vacuolar protein sorting-associated protein 37B (Vps37b) from Mus musculus (Mouse).